The following is an 84-amino-acid chain: ATP synthase subunit c (84 aa).

2 helical membrane passes run 9-29 and 54-74; these read IFGS…GFSL and IVAG…LLFI.

This sequence belongs to the ATPase C chain family. F-type ATPases have 2 components, F(1) - the catalytic core - and F(0) - the membrane proton channel. F(1) has five subunits: alpha(3), beta(3), gamma(1), delta(1), epsilon(1). F(0) has three main subunits: a(1), b(2) and c(10-14). The alpha and beta chains form an alternating ring which encloses part of the gamma chain. F(1) is attached to F(0) by a central stalk formed by the gamma and epsilon chains, while a peripheral stalk is formed by the delta and b chains.

It localises to the cell inner membrane. Functionally, f(1)F(0) ATP synthase produces ATP from ADP in the presence of a proton or sodium gradient. F-type ATPases consist of two structural domains, F(1) containing the extramembraneous catalytic core and F(0) containing the membrane proton channel, linked together by a central stalk and a peripheral stalk. During catalysis, ATP synthesis in the catalytic domain of F(1) is coupled via a rotary mechanism of the central stalk subunits to proton translocation. In terms of biological role, key component of the F(0) channel; it plays a direct role in translocation across the membrane. A homomeric c-ring of between 10-14 subunits forms the central stalk rotor element with the F(1) delta and epsilon subunits. This chain is ATP synthase subunit c, found in Histophilus somni (strain 2336) (Haemophilus somnus).